A 227-amino-acid chain; its full sequence is MVNTMTWHDVLAEEKEKPYFRNTLARVAAERAAGKTVYPPQTDVFNAFRLTELGGVKVVILGQDPYHGPNQAHGLAFSVLPGVPVPPSLVNMYKELVTDIPGFERPNHGFLESWARQGVMLLNTVLTVEAGQAHSHVKFGWETFTDNVIAAINQHREGVVFLLWGAHAQKKGSIIDRKRHHVLHAPHPSPLSAHRGFFGSAHFSQANRWLTEHGESAIDWMPQLPAR.

Aspartate 64 acts as the Proton acceptor in catalysis.

This sequence belongs to the uracil-DNA glycosylase (UDG) superfamily. UNG family.

It is found in the cytoplasm. The enzyme catalyses Hydrolyzes single-stranded DNA or mismatched double-stranded DNA and polynucleotides, releasing free uracil.. In terms of biological role, excises uracil residues from the DNA which can arise as a result of misincorporation of dUMP residues by DNA polymerase or due to deamination of cytosine. This Erwinia tasmaniensis (strain DSM 17950 / CFBP 7177 / CIP 109463 / NCPPB 4357 / Et1/99) protein is Uracil-DNA glycosylase.